Reading from the N-terminus, the 271-residue chain is Formamidopyrimidine-DNA glycosylase (271 aa).

The active-site Schiff-base intermediate with DNA is proline 2. Catalysis depends on glutamate 3, which acts as the Proton donor. The Proton donor; for beta-elimination activity role is filled by lysine 57. Histidine 90, arginine 109, and lysine 151 together coordinate DNA. The segment at 236 to 270 adopts an FPG-type zinc-finger fold; the sequence is HVYGRGGDTCTHCGQLLSEIRLGQRATVFCSICQQ. The Proton donor; for delta-elimination activity role is filled by arginine 260.

It belongs to the FPG family. In terms of assembly, monomer. Zn(2+) serves as cofactor.

It catalyses the reaction Hydrolysis of DNA containing ring-opened 7-methylguanine residues, releasing 2,6-diamino-4-hydroxy-5-(N-methyl)formamidopyrimidine.. It carries out the reaction 2'-deoxyribonucleotide-(2'-deoxyribose 5'-phosphate)-2'-deoxyribonucleotide-DNA = a 3'-end 2'-deoxyribonucleotide-(2,3-dehydro-2,3-deoxyribose 5'-phosphate)-DNA + a 5'-end 5'-phospho-2'-deoxyribonucleoside-DNA + H(+). In terms of biological role, involved in base excision repair of DNA damaged by oxidation or by mutagenic agents. Acts as a DNA glycosylase that recognizes and removes damaged bases. Has a preference for oxidized purines, such as 7,8-dihydro-8-oxoguanine (8-oxoG). Has AP (apurinic/apyrimidinic) lyase activity and introduces nicks in the DNA strand. Cleaves the DNA backbone by beta-delta elimination to generate a single-strand break at the site of the removed base with both 3'- and 5'-phosphates. This chain is Formamidopyrimidine-DNA glycosylase, found in Shewanella piezotolerans (strain WP3 / JCM 13877).